The primary structure comprises 80 residues: Large ribosomal subunit protein bL31B (80 aa).

Belongs to the bacterial ribosomal protein bL31 family. Type B subfamily. Part of the 50S ribosomal subunit.

This chain is Large ribosomal subunit protein bL31B, found in Xanthomonas axonopodis pv. citri (strain 306).